The primary structure comprises 1160 residues: Protein translocase subunit SecA (1160 aa).

ATP is bound by residues Q162 and 180-184 (GEGKT). Residues 342-362 (LLEEKEEAEEEGDSRRAQELE) form a disordered region. Positions 344–353 (EEKEEAEEEG) are enriched in acidic residues. D726 contributes to the ATP binding site. The segment at 1060 to 1134 (EVQTEGQGPR…RNEYVTVRNN (75 aa)) is disordered. A compositionally biased stretch (polar residues) spans 1074–1083 (QRNAQTQHDS). Over residues 1104-1115 (AAERDPTVEEKQ) the composition is skewed to basic and acidic residues.

This sequence belongs to the SecA family. Monomer and homodimer. Part of the essential Sec protein translocation apparatus which comprises SecA, SecYEG and auxiliary proteins SecDF. Other proteins may also be involved.

The protein resides in the cell inner membrane. It localises to the cytoplasm. It carries out the reaction ATP + H2O + cellular proteinSide 1 = ADP + phosphate + cellular proteinSide 2.. In terms of biological role, part of the Sec protein translocase complex. Interacts with the SecYEG preprotein conducting channel. Has a central role in coupling the hydrolysis of ATP to the transfer of proteins into and across the cell membrane, serving as an ATP-driven molecular motor driving the stepwise translocation of polypeptide chains across the membrane. This chain is Protein translocase subunit SecA, found in Salinibacter ruber (strain DSM 13855 / M31).